Reading from the N-terminus, the 197-residue chain is Histocompatibility antigen 60c (197 aa).

An N-terminal signal peptide occupies residues 1–17 (MALLLLILESCSAGTYA). N-linked (GlcNAc...) asparagine glycans are attached at residues N51, N81, and N114. Residue S177 is the site of GPI-anchor amidated serine attachment. Residues 178–197 (MACKSSPFDGLIMILLIYIL) constitute a propeptide, removed in mature form.

This sequence belongs to the NKG2D ligand family. As to expression, expressed in skin, and weakly in large intestine.

It is found in the cell membrane. Ligand for the KLRK1 immunosurveillance receptor. Binding to KLRK1 stimulates cell lysis in vitro. This chain is Histocompatibility antigen 60c, found in Mus musculus (Mouse).